Consider the following 796-residue polypeptide: MIKNRKEDLPIVILKENVLFPNITLWVTFDNEYVINSIAQSMLEERLILFAYSNEPNCDESDRGVVKNLCSVGTYSKLIQVIKISKDVIKVLVECQSRVLIDSVSKKNDYLRAKVTFVPDSSGLNRELFTYSKFLKETYEAYRNSLSLKSYDADNEPINYFENPSKLVDIIASNSNLENSIKLELLQELNVKTRIEKLIVNLSIEIDLLDLKKDINSKVRAKLDKGQRDYFLSEQVKEIQKRLGKDENDYIDRLNSKDIPEDVKSKIEKEISRLSKMQMNSPDANIIRSYIELILDLPWNENTVMKNHLSEIEFILRNSHYGMDEAKEKIINFLAVYQINSKVKAPILCLVGPPGIGKTSLVESIARSLSREFVKISLGGLRDEAEIRGHRRTYVGSLPGVFISAMKRSGKSNPVILLDEIDKINSSYKGNPESALLEVLDPEQNYKFIDHYLEIPYDLSNVLFVTTANSLNGMSKPLLDRMEIIKVEGYSYIEKLEIAKIFLIPSIIKESFLDKVYIRIEDDVIFNLIRNYTMESGVRGLKRVLTNLIRRLVRELLYEYSKDQIIKGNFYSPSSLIHGNNSLFTHDPDIPGIYKIININNYYNYVDTEDNLDLIKIDSSGFVYGLAWTNYGGTVLPVEATKFEKKGDIILTGSLGAIMKESAQLAYSIVKTYSSKLNFDVKESPEIHLHFPEGATPKDGPSAGITIATAIASILSDKKVPLDLAMTGEVTLKGFVLPVGGIKEKVLAAYRNGISKVILPKDNKKDYSKLPEEVKDNIDVKFVSSLEEVFDYLNII.

One can recognise a Lon N-terminal domain in the interval 9 to 206 (LPIVILKENV…KLIVNLSIEI (198 aa)). Residue 352–359 (GPPGIGKT) coordinates ATP. The region spanning 617–796 (IDSSGFVYGL…EEVFDYLNII (180 aa)) is the Lon proteolytic domain. Residues Ser702 and Lys745 contribute to the active site.

It belongs to the peptidase S16 family. As to quaternary structure, homohexamer. Organized in a ring with a central cavity.

It is found in the cytoplasm. The enzyme catalyses Hydrolysis of proteins in presence of ATP.. Functionally, ATP-dependent serine protease that mediates the selective degradation of mutant and abnormal proteins as well as certain short-lived regulatory proteins. Required for cellular homeostasis and for survival from DNA damage and developmental changes induced by stress. Degrades polypeptides processively to yield small peptide fragments that are 5 to 10 amino acids long. Binds to DNA in a double-stranded, site-specific manner. The chain is Lon protease 2 (lon2) from Borreliella burgdorferi (strain ATCC 35210 / DSM 4680 / CIP 102532 / B31) (Borrelia burgdorferi).